We begin with the raw amino-acid sequence, 188 residues long: Inner membrane-spanning protein YciB (188 aa).

5 consecutive transmembrane segments (helical) span residues 23-43, 49-69, 73-93, 116-133, and 149-169; these read FQKA…IGYA, AMLP…GLIF, VFVK…LVGG, WRTL…VAII, and FRLA…PFMM.

This sequence belongs to the YciB family.

The protein resides in the cell inner membrane. Its function is as follows. Plays a role in cell envelope biogenesis, maintenance of cell envelope integrity and membrane homeostasis. The sequence is that of Inner membrane-spanning protein YciB from Caulobacter vibrioides (strain ATCC 19089 / CIP 103742 / CB 15) (Caulobacter crescentus).